Consider the following 121-residue polypeptide: Ribulose bisphosphate carboxylase small subunit (121 aa).

Belongs to the RuBisCO small chain family. As to quaternary structure, heterohexadecamer of 8 large and 8 small subunits.

In terms of biological role, ruBisCO catalyzes two reactions: the carboxylation of D-ribulose 1,5-bisphosphate, the primary event in carbon dioxide fixation, as well as the oxidative fragmentation of the pentose substrate. Both reactions occur simultaneously and in competition at the same active site. Although the small subunit is not catalytic it is essential for maximal activity. This chain is Ribulose bisphosphate carboxylase small subunit, found in Alvinoconcha hessleri symbiotic bacterium.